A 390-amino-acid chain; its full sequence is Coenzyme A biosynthesis bifunctional protein CoaBC (390 aa).

Residues 1-188 are phosphopantothenoylcysteine decarboxylase; sequence MDKNKHILIG…NQKDYLKNKK (188 aa). The active-site Proton donor is cysteine 156. Residues 189–390 are phosphopantothenate--cysteine ligase; the sequence is ILITASRTEE…VAKEILKILY (202 aa). Residues aspartate 277, lysine 287, 304 to 307, phenylalanine 323, lysine 338, and lysine 342 contribute to the CTP site; that span reads PDII.

This sequence in the N-terminal section; belongs to the HFCD (homo-oligomeric flavin containing Cys decarboxylase) superfamily. It in the C-terminal section; belongs to the PPC synthetase family. Mg(2+) is required as a cofactor. Requires FMN as cofactor.

It carries out the reaction N-[(R)-4-phosphopantothenoyl]-L-cysteine + H(+) = (R)-4'-phosphopantetheine + CO2. It catalyses the reaction (R)-4'-phosphopantothenate + L-cysteine + CTP = N-[(R)-4-phosphopantothenoyl]-L-cysteine + CMP + diphosphate + H(+). It participates in cofactor biosynthesis; coenzyme A biosynthesis; CoA from (R)-pantothenate: step 2/5. The protein operates within cofactor biosynthesis; coenzyme A biosynthesis; CoA from (R)-pantothenate: step 3/5. In terms of biological role, catalyzes two sequential steps in the biosynthesis of coenzyme A. In the first step cysteine is conjugated to 4'-phosphopantothenate to form 4-phosphopantothenoylcysteine. In the second step the latter compound is decarboxylated to form 4'-phosphopantotheine. The polypeptide is Coenzyme A biosynthesis bifunctional protein CoaBC (Borreliella burgdorferi (strain ATCC 35210 / DSM 4680 / CIP 102532 / B31) (Borrelia burgdorferi)).